The primary structure comprises 545 residues: uncharacterized protein (545 aa).

Disordered regions lie at residues Met-1–Glu-162 and Tyr-200–Pro-250. Residues Asn-86–Ser-100 show a composition bias toward polar residues. Low complexity-rich tracts occupy residues Thr-109–Lys-128 and Ser-141–Thr-152. 2 stretches are compositionally biased toward polar residues: residues Ser-212–Thr-221 and Ile-228–Ser-244. Residues Arg-458–Gly-540 enclose the PDZ domain.

This is an uncharacterized protein from Caenorhabditis elegans.